The following is a 219-amino-acid chain: tRNA (guanine-N(7)-)-methyltransferase (219 aa).

Glu46, Glu71, Asp100, and Asp122 together coordinate S-adenosyl-L-methionine. Asp122 is a catalytic residue. Lys126 serves as a coordination point for substrate. The segment at 128–133 (KHEKRR) is interaction with RNA. Substrate is bound by residues Asp158 and 199–202 (TEYE).

Belongs to the class I-like SAM-binding methyltransferase superfamily. TrmB family.

The catalysed reaction is guanosine(46) in tRNA + S-adenosyl-L-methionine = N(7)-methylguanosine(46) in tRNA + S-adenosyl-L-homocysteine. It functions in the pathway tRNA modification; N(7)-methylguanine-tRNA biosynthesis. Functionally, catalyzes the formation of N(7)-methylguanine at position 46 (m7G46) in tRNA. This chain is tRNA (guanine-N(7)-)-methyltransferase, found in Oenococcus oeni (strain ATCC BAA-331 / PSU-1).